Reading from the N-terminus, the 1268-residue chain is Vigilin (1268 aa).

S2 carries the post-translational modification N-acetylserine. T8 is modified (phosphothreonine). 3 positions are modified to phosphoserine: S11, S31, and S35. KH domains follow at residues 158–229 (PKEH…RLEV), 230–302 (EKAF…AVEV), 303–371 (KKSQ…SVAA), 372–442 (PSWL…EINI), 443–514 (DHKF…DLII), 515–588 (EQRF…SVPI), 589–660 (FKQF…EVSI), 661–734 (PAKL…DIRA), 735–807 (KPEY…SMLV), 808–880 (DPKH…ECAI), 881–979 (PQKF…EVEV), 980–1059 (PFDL…SVTV), 1060–1134 (DPKY…DVPL), and 1135–1209 (DHRV…ALQV). Phosphothreonine occurs at positions 295 and 296. A Phosphoserine modification is found at S317. At Y437 the chain carries Phosphotyrosine. S645 bears the Phosphoserine mark. The interval 910 to 947 (PDREENPVHSTEPAVQENGDEAGEGREAKDSDPGSPRR) is disordered. Residues 932–947 (GEGREAKDSDPGSPRR) are compositionally biased toward basic and acidic residues. The residue at position 991 (K991) is an N6-acetyllysine. The span at 1237–1249 (SSEKAPDMSSSEE) shows a compositional bias: polar residues. Residues 1237 to 1268 (SSEKAPDMSSSEEFPSFGAQVAPKTLPWGPKR) form a disordered region. S1247 and S1252 each carry phosphoserine.

It is found in the cytoplasm. Its subcellular location is the nucleus. Appears to play a role in cell sterol metabolism. It may function to protect cells from over-accumulation of cholesterol. This is Vigilin (HDLBP) from Pongo abelii (Sumatran orangutan).